Here is a 108-residue protein sequence, read N- to C-terminus: Glutaredoxin-1 (108 aa).

The Glutaredoxin domain maps to 3 to 106; it reads EEFVQQRLAN…DILSSIGVLR (104 aa). An intrachain disulfide couples C23 to C26.

This sequence belongs to the glutaredoxin family.

It is found in the virion. Has thioltransferase and dehydroascorbate reductase activities. This Camelpox virus (strain M-96) protein is Glutaredoxin-1 (OPG075).